Here is a 196-residue protein sequence, read N- to C-terminus: Holliday junction resolvase RecU (196 aa).

4 residues coordinate Mg(2+): Thr82, Asp84, Glu97, and Gln116.

This sequence belongs to the RecU family. The cofactor is Mg(2+).

Its subcellular location is the cytoplasm. The catalysed reaction is Endonucleolytic cleavage at a junction such as a reciprocal single-stranded crossover between two homologous DNA duplexes (Holliday junction).. Its function is as follows. Endonuclease that resolves Holliday junction intermediates in genetic recombination. Cleaves mobile four-strand junctions by introducing symmetrical nicks in paired strands. Promotes annealing of linear ssDNA with homologous dsDNA. Required for DNA repair, homologous recombination and chromosome segregation. The polypeptide is Holliday junction resolvase RecU (Oceanobacillus iheyensis (strain DSM 14371 / CIP 107618 / JCM 11309 / KCTC 3954 / HTE831)).